A 192-amino-acid chain; its full sequence is Cytidylate kinase (192 aa).

Glycine 12–threonine 20 is an ATP binding site.

This sequence belongs to the cytidylate kinase family. Type 2 subfamily.

The protein resides in the cytoplasm. It catalyses the reaction CMP + ATP = CDP + ADP. It carries out the reaction dCMP + ATP = dCDP + ADP. The sequence is that of Cytidylate kinase (cmk) from Pyrococcus horikoshii (strain ATCC 700860 / DSM 12428 / JCM 9974 / NBRC 100139 / OT-3).